The primary structure comprises 359 residues: UbiA prenyltransferase domain-containing protein 1 homolog (359 aa).

Positions 1–16 are enriched in polar residues; that stretch reads MATSSQLLPNGNLSRN. The interval 1 to 23 is disordered; that stretch reads MATSSQLLPNGNLSRNGKTKTED. 8 helical membrane passes run 67-89, 98-118, 148-168, 177-197, 200-220, 262-284, 289-311, and 335-355; these read ALRP…LAYR, LATF…GNVV, VVSL…LLAV, LALI…GIGF, IALG…LFAF, IVTL…LLFA, FFIF…PQAF, and FFFG…PTFG.

Belongs to the UbiA prenyltransferase family.

Its subcellular location is the mitochondrion membrane. It functions in the pathway quinol/quinone metabolism; menaquinone biosynthesis. Prenyltransferase that mediates the formation of menaquinone-4 (MK-4), a vitamin K2 isoform, thereby acting as a mitochondrial electron carrier. Mediates the conversion of phylloquinone (PK) into MK-4, probably by cleaving the side chain of phylloquinone (PK) to release 2-methyl-1,4-naphthoquinone (menadione; K3) and then prenylating it with geranylgeranyl pyrophosphate (GGPP) to form MK-4. MK-4 acts as a membrane electron carrier downstream of a electron transport chain complex, improving mitochondrial oxygen consumption. This is UbiA prenyltransferase domain-containing protein 1 homolog (heix) from Drosophila melanogaster (Fruit fly).